The primary structure comprises 555 residues: MARVEL domain-containing protein 2 (555 aa).

Positions 1–20 are enriched in basic and acidic residues; it reads MSSSDARSRIRDRGYSEVPR. Positions 1–71 are disordered; the sequence is MSSSDARSRI…FYSSDTEEPA (71 aa). At 1 to 191 the chain is on the cytoplasmic side; sequence MSSSDARSRI…YMKSWAGLLR (191 aa). Residues 46 to 59 are compositionally biased toward pro residues; it reads PLPPPPLPLQPPFG. Phosphoserine occurs at positions 117, 121, and 158. Residues 118–142 are disordered; that stretch reads PPASPARANHHPYKDPSRGSQGTFN. Thr-163 carries the post-translational modification Phosphothreonine. The MARVEL domain maps to 185–364; it reads SWAGLLRILG…SALVCLKLWR (180 aa). A helical membrane pass occupies residues 192 to 212; sequence ILGVVELLLGAGVFACVTAYI. The Extracellular segment spans residues 213–251; it reads HKDNEWYNLFGYTQPYGMGGLGSLGNTYGGYYYSGPKTP. Residues 252-272 form a helical membrane-spanning segment; the sequence is FVLVVAGLAWITTIIILVLGM. Residues 273-288 lie on the Cytoplasmic side of the membrane; the sequence is SMYYRTILLDSNWWPL. The helical transmembrane segment at 289-309 threads the bilayer; sequence TEFGVNVALFILYMAAAIVYV. Residues 310-338 are Extracellular-facing; the sequence is NDTNRGGLCYYPLFNTPMNAMFCRVEGGQ. A helical transmembrane segment spans residues 339-359; the sequence is IAAMIFLFVTMIVYLVSALVC. The Cytoplasmic portion of the chain corresponds to 360–555; it reads LKLWRHEAAR…VMNWDTQGYP (196 aa). Position 384 is a phosphoserine (Ser-384). Lys-408 is covalently cross-linked (Glycyl lysine isopeptide (Lys-Gly) (interchain with G-Cter in ubiquitin)). The 112-residue stretch at 437 to 548 folds into the OCEL domain; sequence PDYVAKYPVI…RIQEYDKVMN (112 aa). Residues 521–545 adopt a coiled-coil conformation; that stretch reads EKKERCDYLKNKLSHIKQRIQEYDK.

Belongs to the ELL/occludin family. As to quaternary structure, interacts with TJP1. Interacts with the ubiquitin ligase ITCH. Interacts (via C-terminal cytoplasmic domain) with LSR (via the cytoplasmic domain), ILDR1 and ILDR2; the interaction is required to recruit MARVELD2 to tricellular contacts. Post-translationally, ubiquitinated by ITCH; but this ubiquitination does not lead to proteasomal degradation. Polyubiquitinated at Lys-408 via 'Lys-63'-linked ubiquitin chains; deubiquitinated by USP53. Phosphorylated. Detected in small intestine, stomach and kidney, in epithelial cells. Detected in pancreas, retina and lung, and in stria vascularis, utricle and the organ of Conti in the inner ear (at protein level). Predominantly detected in small intestine, lung and kidney, with lower levels in liver, testis and brain. In colon, expressed in the entire crypts.

It is found in the cell membrane. Its subcellular location is the cell junction. The protein localises to the tight junction. Functionally, plays a role in the formation of tricellular tight junctions and of epithelial barriers. Required for normal hearing via its role in the separation of the endolymphatic and perilymphatic spaces of the organ of Corti in the inner ear, and for normal survival of hair cells in the organ of Corti. The chain is MARVEL domain-containing protein 2 from Mus musculus (Mouse).